Reading from the N-terminus, the 786-residue chain is E3 ubiquitin-protein ligase pub3 (786 aa).

Residues 1 to 109 (MEQGAKRVRF…RSNREVSLTR (109 aa)) enclose the C2 domain. Disordered stretches follow at residues 134–225 (IRAP…NSNA) and 263–306 (TWTR…DSGN). Residues 142–193 (SSTTANRTTSTPTTTTARTTRTTPRPTATTNTSNQSTSNSTRNGTSAATSNG) show a composition bias toward low complexity. Over residues 204–213 (HRSSPVTNRQ) the composition is skewed to polar residues. Residues 214-225 (TNNTSALSNSNA) show a composition bias toward low complexity. The 34-residue stretch at 236-269 (GRLPPGWERRADSLGRTYYVDHNTRTTTWTRPAS) folds into the WW 1 domain. 2 stretches are compositionally biased toward polar residues: residues 263-285 (TWTRPASSTNPVHNTSSDSQRLN) and 295-305 (SNPSLMQSDSG). WW domains lie at 306–339 (NDLPFGWEMRYTDTGRPYFVDHNTRTTTWVDPRN) and 364–397 (GPLPSGWEMRLTNSARVYFVDHNTKTTTWDDPRL). Residues 453 to 786 (SAHDLKKRLM…VENTVGFGNE (334 aa)) enclose the HECT domain. Cysteine 754 (glycyl thioester intermediate) is an active-site residue.

The catalysed reaction is S-ubiquitinyl-[E2 ubiquitin-conjugating enzyme]-L-cysteine + [acceptor protein]-L-lysine = [E2 ubiquitin-conjugating enzyme]-L-cysteine + N(6)-ubiquitinyl-[acceptor protein]-L-lysine.. It participates in protein modification; protein ubiquitination. Its function is as follows. E3 ubiquitin-protein ligase which accepts ubiquitin from an E2 ubiquitin-conjugating enzyme in the form of a thioester and then directly transfers the ubiquitin to targeted substrates. The chain is E3 ubiquitin-protein ligase pub3 (pub3) from Schizosaccharomyces pombe (strain 972 / ATCC 24843) (Fission yeast).